Reading from the N-terminus, the 277-residue chain is Ribosomal RNA small subunit methyltransferase A (277 aa).

The S-adenosyl-L-methionine site is built by asparagine 20, leucine 22, glycine 47, glutamate 68, aspartate 93, and asparagine 114.

It belongs to the class I-like SAM-binding methyltransferase superfamily. rRNA adenine N(6)-methyltransferase family. RsmA subfamily.

It localises to the cytoplasm. It catalyses the reaction adenosine(1518)/adenosine(1519) in 16S rRNA + 4 S-adenosyl-L-methionine = N(6)-dimethyladenosine(1518)/N(6)-dimethyladenosine(1519) in 16S rRNA + 4 S-adenosyl-L-homocysteine + 4 H(+). In terms of biological role, specifically dimethylates two adjacent adenosines (A1518 and A1519) in the loop of a conserved hairpin near the 3'-end of 16S rRNA in the 30S particle. May play a critical role in biogenesis of 30S subunits. This Aliivibrio salmonicida (strain LFI1238) (Vibrio salmonicida (strain LFI1238)) protein is Ribosomal RNA small subunit methyltransferase A.